Consider the following 116-residue polypeptide: Small ribosomal subunit protein uS8c (116 aa).

This sequence belongs to the universal ribosomal protein uS8 family. Part of the 30S ribosomal subunit.

Its subcellular location is the plastid. It is found in the chloroplast. In terms of biological role, one of the primary rRNA binding proteins, it binds directly to 16S rRNA central domain where it helps coordinate assembly of the platform of the 30S subunit. This Musa acuminata (Banana) protein is Small ribosomal subunit protein uS8c (rps8).